Here is a 125-residue protein sequence, read N- to C-terminus: Large ribosomal subunit protein bL12 (125 aa).

The protein belongs to the bacterial ribosomal protein bL12 family. As to quaternary structure, homodimer. Part of the ribosomal stalk of the 50S ribosomal subunit. Forms a multimeric L10(L12)X complex, where L10 forms an elongated spine to which 2 to 4 L12 dimers bind in a sequential fashion. Binds GTP-bound translation factors.

In terms of biological role, forms part of the ribosomal stalk which helps the ribosome interact with GTP-bound translation factors. Is thus essential for accurate translation. This chain is Large ribosomal subunit protein bL12, found in Rickettsia felis (strain ATCC VR-1525 / URRWXCal2) (Rickettsia azadi).